A 207-amino-acid polypeptide reads, in one-letter code: C-type lectin domain family 2 member D11 (207 aa).

Residues 1 to 44 are Cytoplasmic-facing; it reads MSAKKASQPMLNTTGSLQEGEMGKMFHGKCLRIVSPESPAKLYC. A phosphoserine mark is found at S7 and S16. Residues 45–65 traverse the membrane as a helical; Signal-anchor for type II membrane protein segment; sequence CYGVIMVLSVAVVALSVALSV. The Extracellular segment spans residues 66-207; that stretch reads KMTPQISTIN…LQCKTPFSPM (142 aa). One can recognise a C-type lectin domain in the interval 87–198; sequence VGNKCFYFSE…SCSKLNSYSL (112 aa). Residue N100 is glycosylated (N-linked (GlcNAc...) asparagine).

It is found in the cell membrane. In terms of biological role, receptor for KLRB1B that protects target cells against natural killer cell-mediated lysis. This chain is C-type lectin domain family 2 member D11 (Clec2d11), found in Rattus norvegicus (Rat).